The following is an 85-amino-acid chain: MINVSLKRSLLIFISVITSNIGSEARELTGAGKKLEVATRSSNYAGTARTLLQARPCQRDVDCNFQCPRIQGGQCNNHHGTCDCF.

The N-terminal stretch at 1-25 (MINVSLKRSLLIFISVITSNIGSEA) is a signal peptide. 3 cysteine pairs are disulfide-bonded: Cys-57–Cys-75, Cys-63–Cys-82, and Cys-67–Cys-84.

This sequence belongs to the DEFL family.

Its subcellular location is the secreted. The sequence is that of Putative defensin-like protein 258 from Arabidopsis thaliana (Mouse-ear cress).